The primary structure comprises 89 residues: Small ribosomal subunit protein uS14 (89 aa).

The protein belongs to the universal ribosomal protein uS14 family. In terms of assembly, part of the 30S ribosomal subunit. Contacts proteins S3 and S10.

In terms of biological role, binds 16S rRNA, required for the assembly of 30S particles and may also be responsible for determining the conformation of the 16S rRNA at the A site. In Shouchella clausii (strain KSM-K16) (Alkalihalobacillus clausii), this protein is Small ribosomal subunit protein uS14.